The following is a 103-amino-acid chain: Small ribosomal subunit protein uS10 (103 aa).

It belongs to the universal ribosomal protein uS10 family. As to quaternary structure, part of the 30S ribosomal subunit.

Its function is as follows. Involved in the binding of tRNA to the ribosomes. The protein is Small ribosomal subunit protein uS10 of Ruthia magnifica subsp. Calyptogena magnifica.